Consider the following 101-residue polypeptide: Small ribosomal subunit protein uS14 (101 aa).

The protein belongs to the universal ribosomal protein uS14 family. In terms of assembly, part of the 30S ribosomal subunit. Contacts proteins S3 and S10.

Functionally, binds 16S rRNA, required for the assembly of 30S particles and may also be responsible for determining the conformation of the 16S rRNA at the A site. The sequence is that of Small ribosomal subunit protein uS14 from Shewanella sediminis (strain HAW-EB3).